The following is a 279-amino-acid chain: Shikimate dehydrogenase (NADP(+)) (279 aa).

Residues 20–22 (SRS) and T67 each bind shikimate. K71 serves as the catalytic Proton acceptor. An NADP(+)-binding site is contributed by D83. 2 residues coordinate shikimate: N92 and D108. NADP(+) is bound by residues 134 to 138 (GAGGA) and L223. Y225 contributes to the shikimate binding site. Residue G246 coordinates NADP(+).

It belongs to the shikimate dehydrogenase family. As to quaternary structure, homodimer.

The enzyme catalyses shikimate + NADP(+) = 3-dehydroshikimate + NADPH + H(+). The protein operates within metabolic intermediate biosynthesis; chorismate biosynthesis; chorismate from D-erythrose 4-phosphate and phosphoenolpyruvate: step 4/7. In terms of biological role, involved in the biosynthesis of the chorismate, which leads to the biosynthesis of aromatic amino acids. Catalyzes the reversible NADPH linked reduction of 3-dehydroshikimate (DHSA) to yield shikimate (SA). The polypeptide is Shikimate dehydrogenase (NADP(+)) (Cereibacter sphaeroides (strain ATCC 17029 / ATH 2.4.9) (Rhodobacter sphaeroides)).